A 117-amino-acid chain; its full sequence is uncharacterized protein (117 aa).

This is an uncharacterized protein from Acheta domesticus (House cricket).